Reading from the N-terminus, the 662-residue chain is MTSKAVVFAYHDIGCTGIEALLNAGYEIAAVFTHADDPRENTFYASVARLCAERGIPLHAPEDVNHPLWLERIRQLRPDFLFSFYYRRLLGAELLACAARGAYNLHGSLLPRYRGRAPANWVLVNGETQTGVTLHRMIERADAGPILAQQAVAIDPEDTALSLHGKLRKAAGALLRDSLPLLALGVLPEVEQDESQASHFGRRTPADGLLDWHRPARQLYDLVRAVTQPYPGAFCQVGEQKLIVWSAEVVAGNHGREPGSVLSCDPLRIACGEDSLVLRFGQRGERGLYLAGTQLATELGLVEGARLRGAASGPQRRTRVLILGVNGFIGNHLSERLLRDGRYEVHGMDIGSDAIERLKADPHFHFVEGDIGIHSEWLEYHVKKCDVVLPLVAIATPIEYTRNPLRVFELDFEENLRIVRYCVKYGKRVVFPSTSEVYGMCQDPDFDEDRSNLVVGPINKQRWIYSVSKQLLDRVIWAYGQQGLRFTLFRPFNWMGPRLDRLDSARIGSSRAITQLILHLVEGTPIRLVDGGAQKRCFTDVDDGIEALARIIDNRDGRCDGQIVNIGNPDNEASIRQLGEELLRQFEAHPLRAQFPPFAGFREVESRSFYGDGYQDVAHRKPSIDNARRLLDWQPTIELRETIGKTLDFFLHEALREREAQA.

The tract at residues 1-307 (MTSKAVVFAY…ELGLVEGARL (307 aa)) is formyltransferase ArnAFT. H106 serves as the catalytic Proton donor; for formyltransferase activity. Residues R116 and 138–142 (IERAD) contribute to the (6R)-10-formyltetrahydrofolate site. Residues 316-662 (RRTRVLILGV…EALREREAQA (347 aa)) form a dehydrogenase ArnADH region. Residues D349 and 370–371 (DI) each bind NAD(+). UDP-alpha-D-glucuronate contacts are provided by residues A395, Y400, and 434 to 435 (TS). E436 serves as the catalytic Proton acceptor; for decarboxylase activity. UDP-alpha-D-glucuronate contacts are provided by residues R462, N493, 527–536 (RLVDGGAQKR), and Y614. R620 functions as the Proton donor; for decarboxylase activity in the catalytic mechanism.

It in the N-terminal section; belongs to the Fmt family. UDP-L-Ara4N formyltransferase subfamily. In the C-terminal section; belongs to the NAD(P)-dependent epimerase/dehydratase family. UDP-glucuronic acid decarboxylase subfamily. As to quaternary structure, homohexamer, formed by a dimer of trimers.

The catalysed reaction is UDP-alpha-D-glucuronate + NAD(+) = UDP-beta-L-threo-pentopyranos-4-ulose + CO2 + NADH. It catalyses the reaction UDP-4-amino-4-deoxy-beta-L-arabinose + (6R)-10-formyltetrahydrofolate = UDP-4-deoxy-4-formamido-beta-L-arabinose + (6S)-5,6,7,8-tetrahydrofolate + H(+). It participates in nucleotide-sugar biosynthesis; UDP-4-deoxy-4-formamido-beta-L-arabinose biosynthesis; UDP-4-deoxy-4-formamido-beta-L-arabinose from UDP-alpha-D-glucuronate: step 1/3. It functions in the pathway nucleotide-sugar biosynthesis; UDP-4-deoxy-4-formamido-beta-L-arabinose biosynthesis; UDP-4-deoxy-4-formamido-beta-L-arabinose from UDP-alpha-D-glucuronate: step 3/3. The protein operates within bacterial outer membrane biogenesis; lipopolysaccharide biosynthesis. In terms of biological role, bifunctional enzyme that catalyzes the oxidative decarboxylation of UDP-glucuronic acid (UDP-GlcUA) to UDP-4-keto-arabinose (UDP-Ara4O) and the addition of a formyl group to UDP-4-amino-4-deoxy-L-arabinose (UDP-L-Ara4N) to form UDP-L-4-formamido-arabinose (UDP-L-Ara4FN). The modified arabinose is attached to lipid A and is required for resistance to polymyxin and cationic antimicrobial peptides. The protein is Bifunctional polymyxin resistance protein ArnA of Pseudomonas aeruginosa (strain UCBPP-PA14).